The primary structure comprises 598 residues: Eukaryotic translation initiation factor 3 subunit D (598 aa).

Residues 104-178 (VKTRGFGRGG…YDKPQRNRDS (75 aa)) are disordered. Positions 109–132 (FGRGGGTIFRGRGQRGGAQRGRGG) are enriched in gly residues. The span at 165–177 (GWKDYDKPQRNRD) shows a compositional bias: basic and acidic residues. The interval 304–318 (SIDLVTVNENAADAP) is RNA gate. Residues 574 to 598 (NTFEEEDDTGAKAEKDEESEEKDEE) form a disordered region. Residues 589 to 598 (DEESEEKDEE) are compositionally biased toward acidic residues.

This sequence belongs to the eIF-3 subunit D family. As to quaternary structure, component of the eukaryotic translation initiation factor 3 (eIF-3) complex.

It is found in the cytoplasm. In terms of biological role, mRNA cap-binding component of the eukaryotic translation initiation factor 3 (eIF-3) complex, which is involved in protein synthesis of a specialized repertoire of mRNAs and, together with other initiation factors, stimulates binding of mRNA and methionyl-tRNAi to the 40S ribosome. The eIF-3 complex specifically targets and initiates translation of a subset of mRNAs involved in cell proliferation. In the eIF-3 complex, eif3d specifically recognizes and binds the 7-methylguanosine cap of a subset of mRNAs. The chain is Eukaryotic translation initiation factor 3 subunit D from Coccidioides immitis (strain RS) (Valley fever fungus).